Here is an 811-residue protein sequence, read N- to C-terminus: Methionine--tRNA ligase (811 aa).

The 'HIGH' region signature appears at 11 to 21 (PYVNNVPHLGN). Cys-142, Cys-145, Cys-155, and Cys-158 together coordinate Zn(2+). A 'KMSKS' region motif is present at residues 344 to 348 (KFSKS). Position 347 (Lys-347) interacts with ATP. Positions 606 to 640 (GVSVPRTAQMPTGMNKKETDAQQKKEEREMPPPSD) are disordered. Residues 620-635 (NKKETDAQQKKEEREM) show a composition bias toward basic and acidic residues. Positions 648-753 (FSERVVLKVA…PWALPGERAT (106 aa)) constitute a tRNA-binding domain.

This sequence belongs to the class-I aminoacyl-tRNA synthetase family. MetG type 1 subfamily. Homodimer. Requires Zn(2+) as cofactor.

The protein resides in the cytoplasm. The catalysed reaction is tRNA(Met) + L-methionine + ATP = L-methionyl-tRNA(Met) + AMP + diphosphate. Functionally, is required not only for elongation of protein synthesis but also for the initiation of all mRNA translation through initiator tRNA(fMet) aminoacylation. This is Methionine--tRNA ligase from Treponema pallidum (strain Nichols).